The following is a 155-amino-acid chain: MRRRRAPKRPVMPDPVYNSEVVTKFINKVMWDGKKTLAERIVYGAIEKLGEKGEEKGIDLFFKAIENVKPLLEVRSRRVGGATYQVPMEVRPERQQTLSIRWIVDAARNRNERTMVERLANELFDAANERGAAFKKREDTHRMAEANKAFAHYRW.

It belongs to the universal ribosomal protein uS7 family. As to quaternary structure, part of the 30S ribosomal subunit. Contacts proteins S9 and S11.

One of the primary rRNA binding proteins, it binds directly to 16S rRNA where it nucleates assembly of the head domain of the 30S subunit. Is located at the subunit interface close to the decoding center, probably blocks exit of the E-site tRNA. This Nautilia profundicola (strain ATCC BAA-1463 / DSM 18972 / AmH) protein is Small ribosomal subunit protein uS7.